The sequence spans 242 residues: Ribonuclease 3 (242 aa).

The RNase III domain maps to 10–146; the sequence is LQNFNKKFAD…FVGALYLDQG (137 aa). Residue E59 participates in Mg(2+) binding. D63 is a catalytic residue. Positions 132 and 135 each coordinate Mg(2+). Residue E135 is part of the active site. A DRBM domain is found at 172 to 241; it reads DFKTQFQELI…AEKAYNDMKK (70 aa). Residues 216–242 are disordered; that stretch reads VAKGQGRTKKESEQKAAEKAYNDMKKK. A compositionally biased stretch (basic and acidic residues) spans 223–242; sequence TKKESEQKAAEKAYNDMKKK.

It belongs to the ribonuclease III family. In terms of assembly, homodimer. It depends on Mg(2+) as a cofactor.

The protein localises to the cytoplasm. It catalyses the reaction Endonucleolytic cleavage to 5'-phosphomonoester.. Digests double-stranded RNA. Involved in the processing of primary rRNA transcript to yield the immediate precursors to the large and small rRNAs (23S and 16S). Processes some mRNAs, and tRNAs when they are encoded in the rRNA operon. Processes pre-crRNA and tracrRNA of type II CRISPR loci if present in the organism. The protein is Ribonuclease 3 of Staphylococcus carnosus (strain TM300).